The following is a 450-amino-acid chain: Tol-Pal system protein TolB (450 aa).

The first 47 residues, 1-47 (MRKLWAPNWLSAKRHHANQAATRLIGRHALMAWLAAALALSAGAAQA), serve as a signal peptide directing secretion.

It belongs to the TolB family. As to quaternary structure, the Tol-Pal system is composed of five core proteins: the inner membrane proteins TolA, TolQ and TolR, the periplasmic protein TolB and the outer membrane protein Pal. They form a network linking the inner and outer membranes and the peptidoglycan layer.

The protein resides in the periplasm. Functionally, part of the Tol-Pal system, which plays a role in outer membrane invagination during cell division and is important for maintaining outer membrane integrity. This chain is Tol-Pal system protein TolB, found in Cupriavidus pinatubonensis (strain JMP 134 / LMG 1197) (Cupriavidus necator (strain JMP 134)).